A 339-amino-acid chain; its full sequence is S-adenosylmethionine:tRNA ribosyltransferase-isomerase (339 aa).

This sequence belongs to the QueA family. As to quaternary structure, monomer.

The protein resides in the cytoplasm. The enzyme catalyses 7-aminomethyl-7-carbaguanosine(34) in tRNA + S-adenosyl-L-methionine = epoxyqueuosine(34) in tRNA + adenine + L-methionine + 2 H(+). Its pathway is tRNA modification; tRNA-queuosine biosynthesis. Transfers and isomerizes the ribose moiety from AdoMet to the 7-aminomethyl group of 7-deazaguanine (preQ1-tRNA) to give epoxyqueuosine (oQ-tRNA). The polypeptide is S-adenosylmethionine:tRNA ribosyltransferase-isomerase (Campylobacter fetus subsp. fetus (strain 82-40)).